We begin with the raw amino-acid sequence, 294 residues long: Small ribosomal subunit protein uS2 (294 aa).

The disordered stretch occupies residues 232 to 294; the sequence is RATGTTEAPE…SAAGEADAAK (63 aa). Basic and acidic residues predominate over residues 246 to 259; the sequence is EWERELLEGSKSEE. Positions 260–294 are enriched in low complexity; sequence AAAPAAAEEAPAAAEEAPAAAEATESAAGEADAAK.

The protein belongs to the universal ribosomal protein uS2 family.

The sequence is that of Small ribosomal subunit protein uS2 from Arthrobacter sp. (strain FB24).